Reading from the N-terminus, the 344-residue chain is Tetraacyldisaccharide 4'-kinase (344 aa).

Position 68 to 75 (68 to 75) interacts with ATP; sequence TAGGNGKT.

This sequence belongs to the LpxK family.

The catalysed reaction is a lipid A disaccharide + ATP = a lipid IVA + ADP + H(+). It functions in the pathway glycolipid biosynthesis; lipid IV(A) biosynthesis; lipid IV(A) from (3R)-3-hydroxytetradecanoyl-[acyl-carrier-protein] and UDP-N-acetyl-alpha-D-glucosamine: step 6/6. Transfers the gamma-phosphate of ATP to the 4'-position of a tetraacyldisaccharide 1-phosphate intermediate (termed DS-1-P) to form tetraacyldisaccharide 1,4'-bis-phosphate (lipid IVA). The chain is Tetraacyldisaccharide 4'-kinase from Photobacterium profundum (strain SS9).